We begin with the raw amino-acid sequence, 322 residues long: Putative small RNA degrading nuclease 4 (322 aa).

Positions 75 to 213 (MLALDCEMVL…HDAAAAMKLA (139 aa)) constitute an Exonuclease domain.

It belongs to the REXO1/REXO3 family.

The protein localises to the nucleus. Functionally, putative 3'-5' exonuclease degrading single-stranded small RNAs. This Arabidopsis thaliana (Mouse-ear cress) protein is Putative small RNA degrading nuclease 4 (SDN4).